The chain runs to 376 residues: WD repeat-containing protein wdr-5.1 (376 aa).

Residues 1-24 (MDTSENAASAAEQQPTQQIDQLTV) show a composition bias toward polar residues. A disordered region spans residues 1-70 (MDTSENAASA…TPNPNAAGAS (70 aa)). A compositionally biased stretch (low complexity) spans 25-53 (PNAPDGGSSAPAPSTSPNSISPSNPTGTP). WD repeat units lie at residues 85 to 115 (GHTK…KIWN), 127 to 157 (GHKL…KIFE), 169 to 199 (GHNN…RIWD), 211 to 241 (AHSD…RIWD), 254 to 284 (DENP…KLWD), 296 to 329 (GHEN…YIWN), and 341 to 373 (GHTQ…HIWR).

This sequence belongs to the WD repeat WDR5/wds family. Component of the SET2 complex (also known as the SET1/COMPASS complex), which contains at least set-2, swd-2.1, cfp-1, rbbp-5, wdr-5.1, dpy-30 and ash-2. Within the complex, interacts with cfp-1, ash-2, dpy-30 and hda-1. Interacts with histone H3 both unmethylated and methylated at 'Lys-4'. Interacts with jmjd-3.1, ceh-6, sox-2, sem-4 and egl-27. Interacts with set-2. Enriched in the germline. Detected in all nuclei of the embryo. In larvae, expression is detected in the nuclei of seam cells, somatic gonad precursor cells Z1 and Z4, vulval precursor cells, distal tip cells, hypodermal cells, intestinal and muscle cells. Also detected in the neurons from the ventral nerve cord, head and tail region. Expressed in the head and tail region, intestinal cells, muscle cells, cells of the vulva, spermatheca and sheath cells in adults.

Its subcellular location is the nucleus. Contributes to histone modification. May position the N-terminus of histone H3 for efficient trimethylation at 'Lys-4'. Required for di- and trimethylation, particularly for the trimethylation at 'Lys-4' of histone H3. Not required for demethylation of histone H3 'Lys-27'. H3 'Lys-4' methylation represents a specific tag for epigenetic transcriptional activation, germline establishment, maintenance and function. Implicated in the epigenetic inheritance of lifespan over several generations. Acts in the germline to limit the longevity of the soma, probably by regulating a lipid metabolism pathway that signals from the germline to the intestine, thereby preventing accumulation of mono-unsaturated fatty acids. Required for RNA interference with probable antagonistic role against hpl-2 function. Plays a role in vulval cell fate specification by acting in the synthetic multivulva pathway independent of set-2. Sex determining protein required in the germline to promote the spermatogenesis to oogenesis switch during the late larval stages of development. Acts with the sex determining factor tra-1, and redundantly with wdr-5.2, to regulate fog-3 expression, which in turn determines germ cell fate. Cooperates with jmjd-3.1, egl-27 and unc-3 to ensure robust transdifferentiation of the Y rectal cell to the PDA motor neuron during larval development. This chain is WD repeat-containing protein wdr-5.1 (wdr-5.1), found in Caenorhabditis elegans.